Consider the following 175-residue polypeptide: Ribonuclease M5 (175 aa).

Residues 3 to 83 (NEIIIVEGKS…DVDVFNAFVS (81 aa)) form the Toprim domain. Residues Glu9, Asp57, and Asp59 each coordinate Mg(2+).

The protein belongs to the ribonuclease M5 family. Mg(2+) is required as a cofactor.

It localises to the cytoplasm. The enzyme catalyses Endonucleolytic cleavage of RNA, removing 21 and 42 nucleotides, respectively, from the 5'- and 3'-termini of a 5S-rRNA precursor.. Its function is as follows. Required for correct processing of both the 5' and 3' ends of 5S rRNA precursor. Cleaves both sides of a double-stranded region yielding mature 5S rRNA in one step. In Mesoplasma florum (strain ATCC 33453 / NBRC 100688 / NCTC 11704 / L1) (Acholeplasma florum), this protein is Ribonuclease M5.